Consider the following 130-residue polypeptide: S-adenosylmethionine decarboxylase proenzyme (130 aa).

Ser78 serves as the catalytic Schiff-base intermediate with substrate; via pyruvic acid. Ser78 bears the Pyruvic acid (Ser); by autocatalysis mark. The active-site Proton acceptor; for processing activity is the His83. The active-site Proton donor; for catalytic activity is the Cys98.

It belongs to the prokaryotic AdoMetDC family. Type 1 subfamily. As to quaternary structure, heterotetramer of two alpha and two beta chains arranged as a dimer of alpha/beta heterodimers. Requires pyruvate as cofactor. In terms of processing, is synthesized initially as an inactive proenzyme. Formation of the active enzyme involves a self-maturation process in which the active site pyruvoyl group is generated from an internal serine residue via an autocatalytic post-translational modification. Two non-identical subunits are generated from the proenzyme in this reaction, and the pyruvate is formed at the N-terminus of the alpha chain, which is derived from the carboxyl end of the proenzyme. The post-translation cleavage follows an unusual pathway, termed non-hydrolytic serinolysis, in which the side chain hydroxyl group of the serine supplies its oxygen atom to form the C-terminus of the beta chain, while the remainder of the serine residue undergoes an oxidative deamination to produce ammonia and the pyruvoyl group blocking the N-terminus of the alpha chain.

The enzyme catalyses S-adenosyl-L-methionine + H(+) = S-adenosyl 3-(methylsulfanyl)propylamine + CO2. Its pathway is amine and polyamine biosynthesis; S-adenosylmethioninamine biosynthesis; S-adenosylmethioninamine from S-adenosyl-L-methionine: step 1/1. Its function is as follows. Catalyzes the decarboxylation of S-adenosylmethionine to S-adenosylmethioninamine (dcAdoMet), the propylamine donor required for the synthesis of the polyamines spermine and spermidine from the diamine putrescine. The protein is S-adenosylmethionine decarboxylase proenzyme of Aeropyrum pernix (strain ATCC 700893 / DSM 11879 / JCM 9820 / NBRC 100138 / K1).